The primary structure comprises 220 residues: Claudin-22 (220 aa).

The Cytoplasmic segment spans residues 1 to 10 (MGLVFRTATQ). Residues 11-31 (AAALLLSLLGWVLSCLTNYLP) traverse the membrane as a helical segment. The Extracellular segment spans residues 32–81 (HWKNLNLELNEMENWTMGLWKSCVIQEEVGRQCKDFDSFLALPAELQVSR). Residues 82-102 (VLMSLCNGLGLLGLLASGCGL) form a helical membrane-spanning segment. At 103 to 120 (DCLRLGETQEGLKKRLLT) the chain is on the cytoplasmic side. Residues 121-141 (LGGTLLWTSGVMVLVPVSWVA) form a helical membrane-spanning segment. At 142–164 (HKTVREFWDETMPEIVPRWEFGE) the chain is on the extracellular side. Residues 165–185 (ALFLGWFAGFCLVLGGCVLHC) form a helical membrane-spanning segment. The Cytoplasmic segment spans residues 186–220 (AACWSPAPAASSHYAVAGPRDHQQHLELKQANPEI).

It belongs to the claudin family.

It is found in the cell junction. Its subcellular location is the tight junction. The protein localises to the cell membrane. Plays a major role in tight junction-specific obliteration of the intercellular space, through calcium-independent cell-adhesion activity. This chain is Claudin-22 (Cldn22), found in Mus musculus (Mouse).